The sequence spans 373 residues: DNA replication and repair protein RecF (373 aa).

An ATP-binding site is contributed by 30–37; sequence GENAQGKT.

Belongs to the RecF family.

It is found in the cytoplasm. Functionally, the RecF protein is involved in DNA metabolism; it is required for DNA replication and normal SOS inducibility. RecF binds preferentially to single-stranded, linear DNA. It also seems to bind ATP. The polypeptide is DNA replication and repair protein RecF (Bacillus cytotoxicus (strain DSM 22905 / CIP 110041 / 391-98 / NVH 391-98)).